A 455-amino-acid chain; its full sequence is MSYFGTDGIRGKFGELPITPDFILKLGYVTGLVLIENNQNSPRKPSVVIGKDTRLSGYVIEGALQAGFNAAGVDVYMLGPLPTPAIAHLTRSFNADAGVVISASHNPYYDNGIKFFSADGKKLTDAMQNAINDKLDAIMAVDGNNDAVMPILDPAQLGKNNRIDDAKGRYIEFCKGSFPYQYDLDHLTVVVDCANGAGYSVAPRVMRELGANVIAINNKPDGININADCGSTHPEGLQEAVLKYEADVGIALDGDGDRIVMVDEAGNLVDGDGILYVLATQGQTKVAGVVGTLMSNMGLELALKAADIEFTRAKVGDRYVMQELEANGWILGGEPSGHILCLDKSRTGDAIIASLQILAVMQARGKALSDLTEGFEVLPQKLVNVRLSQMQDPFEHEELVVAFDKARATLEGRGRLLIRQSGTEPMIRVMVESDDEIECDVMANDLADKIKAILG.

The active-site Phosphoserine intermediate is Ser104. Residues Ser104, Asp253, Asp255, and Asp257 each coordinate Mg(2+). Ser104 carries the post-translational modification Phosphoserine.

The protein belongs to the phosphohexose mutase family. Mg(2+) serves as cofactor. In terms of processing, activated by phosphorylation.

It catalyses the reaction alpha-D-glucosamine 1-phosphate = D-glucosamine 6-phosphate. Functionally, catalyzes the conversion of glucosamine-6-phosphate to glucosamine-1-phosphate. This chain is Phosphoglucosamine mutase, found in Psychrobacter cryohalolentis (strain ATCC BAA-1226 / DSM 17306 / VKM B-2378 / K5).